A 256-amino-acid polypeptide reads, in one-letter code: tRNA-cytidine(32) 2-sulfurtransferase (256 aa).

A PP-loop motif motif is present at residues 35-40 (SGGKDS). C110, C113, and C201 together coordinate [4Fe-4S] cluster.

This sequence belongs to the TtcA family. Homodimer. Mg(2+) serves as cofactor. The cofactor is [4Fe-4S] cluster.

The protein localises to the cytoplasm. The catalysed reaction is cytidine(32) in tRNA + S-sulfanyl-L-cysteinyl-[cysteine desulfurase] + AH2 + ATP = 2-thiocytidine(32) in tRNA + L-cysteinyl-[cysteine desulfurase] + A + AMP + diphosphate + H(+). It functions in the pathway tRNA modification. In terms of biological role, catalyzes the ATP-dependent 2-thiolation of cytidine in position 32 of tRNA, to form 2-thiocytidine (s(2)C32). The sulfur atoms are provided by the cysteine/cysteine desulfurase (IscS) system. The chain is tRNA-cytidine(32) 2-sulfurtransferase from Coxiella burnetii (strain RSA 331 / Henzerling II).